The primary structure comprises 72 residues: VLIIAVLFLTASELVTADYTRDKWQYRAASLRDAMRNFRDTRTCSPAGEVCTSKSPCCTGFLCSHIGGMCHH.

The signal sequence occupies residues 1 to 17; sequence VLIIAVLFLTASELVTA. Positions 18-41 are excised as a propeptide; it reads DYTRDKWQYRAASLRDAMRNFRDT. Intrachain disulfides connect cysteine 44/cysteine 58, cysteine 51/cysteine 63, and cysteine 57/cysteine 70.

It belongs to the conotoxin O1 superfamily. In terms of tissue distribution, expressed by the venom duct.

The protein localises to the secreted. The protein is Conotoxin LvVIA of Conus lividus (Livid cone).